The primary structure comprises 633 residues: Chaperone protein HtpG (633 aa).

The tract at residues 1-344 (MSLQPQAETL…SNDLPLNISR (344 aa)) is a; substrate-binding. The tract at residues 345–560 (ELLQSNEVIN…ENEMSGHLQR (216 aa)) is b. The segment at 561–633 (LLIQTGQDFM…KGLNELLLDS (73 aa)) is c.

Belongs to the heat shock protein 90 family. Homodimer.

It is found in the cytoplasm. Molecular chaperone. Has ATPase activity. This Coxiella burnetii (strain RSA 331 / Henzerling II) protein is Chaperone protein HtpG.